A 219-amino-acid chain; its full sequence is UPF0619 GPI-anchored membrane protein AFUA_3G00880 (219 aa).

Positions 1–16 are cleaved as a signal peptide; the sequence is MRFALTLTAFVGSVAA. The N-linked (GlcNAc...) asparagine glycan is linked to Asn85. 2 disordered regions span residues 107–144 and 160–205; these read SQQFKVESSGSSTTSDSTSSASATGSASTSSSSTGTVS and SSTL…SLTV. Over residues 114 to 144 the composition is skewed to low complexity; that stretch reads SSGSSTTSDSTSSASATGSASTSSSSTGTVS. Asn198 is lipidated: GPI-like-anchor amidated asparagine. Positions 199 to 219 are cleaved as a propeptide — removed in mature form; it reads GAGSLTVPAGSLLLGLVALAL.

This sequence belongs to the UPF0619 family. In terms of processing, the GPI-like anchor contains a phosphoceramide lipid group. The anchor position has not been determined.

Its subcellular location is the cell membrane. This chain is UPF0619 GPI-anchored membrane protein AFUA_3G00880, found in Aspergillus fumigatus (strain ATCC MYA-4609 / CBS 101355 / FGSC A1100 / Af293) (Neosartorya fumigata).